The following is a 134-amino-acid chain: Transcriptional activator protein (134 aa).

Residues 17-31 (KVQHRIAKKTTRRRR) carry the Nuclear localization signal motif. A zinc finger lies at 36–53 (CGCSYFVALGCHNHGFTH). A disordered region spans residues 73 to 103 (KSPVFQDNQTPRETISEEPRHNHNTSPIQLQ). Residues 75–85 (PVFQDNQTPRE) are compositionally biased toward polar residues. The tract at residues 119–134 (NLDSFTSSDLAFLKSI) is transactivation.

This sequence belongs to the geminiviridae transcriptional activator protein family. As to quaternary structure, monomer. Homodimer. Homooligomer. Self-interaction correlates with nuclear localization and efficient activation of transcription. Monomers suppress local silencing by interacting with and inactivating host adenosine kinase 2 (ADK2) in the cytoplasm. Interacts with and inhibits host SNF1 kinase. Binds to ssDNA. May interact with host RPS27A. In terms of processing, phosphorylated.

The protein localises to the host nucleus. It is found in the host cytoplasm. Functionally, multifunctional protein that modulates host antiviral defenses and promotes host attractiveness to insect vectors. Acts as a suppressor of RNA-mediated gene silencing, also known as post-transcriptional gene silencing (PTGS), a mechanism of plant viral defense that limits the accumulation of viral RNAs. TrAP suppresses the host RNA silencing by inhibiting adenosine kinase 2 (ADK2), a kinase involved in a general methylation pathway. Also suppresses the host basal defense by interacting with and inhibiting SNF1 kinase, a key regulator of cell metabolism implicated in innate antiviral defense. Inhibits signal transduction by the phytohormone jasmonate, making the infected plant more attractive to aphids, which are the second host to play a role as a dissemination vector. Acts by binding to ubiquitin precursor RPS27A, thereby preventing ubiquitin degradation of JAZ. The chain is Transcriptional activator protein from Tomato yellow leaf curl China virus (TYLCCNV).